The primary structure comprises 152 residues: DNA-binding transcriptional activator DecR (152 aa).

The 62-residue stretch at 2-63 (LDKIDRKLLA…LLDPEKIGLG (62 aa)) folds into the HTH asnC-type domain. The H-T-H motif DNA-binding region spans 21–40 (LQALAEAVNLTTTPCWKRLK).

Plays a role in L-cysteine detoxification. Binds to the dlsT(yhaO)-yhaM operon promoter in the presence but not absence of L-cysteine; activates transcription from the dlsT(yhaO)-yhaM operon. The polypeptide is DNA-binding transcriptional activator DecR (decR) (Escherichia coli O157:H7).